We begin with the raw amino-acid sequence, 599 residues long: Bile salt-activated lipase (599 aa).

The signal sequence occupies residues methionine 1–alanine 20. An intrachain disulfide couples cysteine 84 to cysteine 100. An N-linked (GlcNAc...) asparagine glycan is attached at asparagine 207. Serine 214 (acyl-ester intermediate) is an active-site residue. A disulfide bond links cysteine 266 and cysteine 277. Asparagine 325 carries an N-linked (GlcNAc...) asparagine glycan. Residues aspartate 340 and histidine 455 each act as charge relay system in the active site. A disordered region spans residues threonine 553–phenylalanine 599. 3 repeat units span residues leucine 559 to alanine 569, proline 570 to valine 580, and proline 581 to serine 588. Positions leucine 559–serine 588 are 4 X 11 AA tandem repeats, O-glycosylated region.

Belongs to the type-B carboxylesterase/lipase family. Interacts with CLC. EXpressed by eosinophils.

The protein resides in the secreted. It catalyses the reaction a triacylglycerol + H2O = a diacylglycerol + a fatty acid + H(+). The catalysed reaction is 1,2,3-tri-(9Z-octadecenoyl)-glycerol + H2O = di-(9Z)-octadecenoylglycerol + (9Z)-octadecenoate + H(+). It carries out the reaction 1,2,3-trioctanoylglycerol + H2O = dioctanoylglycerol + octanoate + H(+). The enzyme catalyses a sterol ester + H2O = a sterol + a fatty acid + H(+). It catalyses the reaction an acetyl ester + H2O = an aliphatic alcohol + acetate + H(+). The catalysed reaction is a butanoate ester + H2O = an aliphatic alcohol + butanoate + H(+). It carries out the reaction 9-hexadecanoyloxy-octadecanoate + H2O = 9-hydroxy-octadecanoate + hexadecanoate + H(+). The enzyme catalyses 9-(9Z-octadecenoyloxy)-octadecanoate + H2O = 9-hydroxy-octadecanoate + (9Z)-octadecenoate + H(+). It catalyses the reaction cholesteryl (9Z-octadecenoate) + H2O = cholesterol + (9Z)-octadecenoate + H(+). The catalysed reaction is 1-hexadecanoyl-sn-glycero-3-phosphocholine + H2O = sn-glycerol 3-phosphocholine + hexadecanoate + H(+). It carries out the reaction 12-hexadecanoyloxy-octadecanoate + H2O = 12-hydroxyoctadecanoate + hexadecanoate + H(+). The enzyme catalyses 12-(9Z-octadecenoyloxy)-octadecanoate + H2O = 12-hydroxyoctadecanoate + (9Z)-octadecenoate + H(+). It catalyses the reaction 13-(9Z-octadecenoyloxy)-octadecanoate + H2O = 13-hydroxy-octadecanoate + (9Z)-octadecenoate + H(+). The catalysed reaction is 9-(9Z-hexadecenoyloxy)-octadecanoate + H2O = (9Z)-hexadecenoate + 9-hydroxy-octadecanoate + H(+). It carries out the reaction 12-(9Z-hexadecenoyloxy)-octadecanoate + H2O = 12-hydroxyoctadecanoate + (9Z)-hexadecenoate + H(+). The enzyme catalyses 13-(9Z-hexadecenoyloxy)-octadecanoate + H2O = 13-hydroxy-octadecanoate + (9Z)-hexadecenoate + H(+). It catalyses the reaction 12-octadecanoyloxy-octadecanoate + H2O = 12-hydroxyoctadecanoate + octadecanoate + H(+). The catalysed reaction is 13-octadecanoyloxy-octadecanoate + H2O = 13-hydroxy-octadecanoate + octadecanoate + H(+). It carries out the reaction 5-(9Z-hexadecenoyloxy)-octadecanoate + H2O = 5-hydroxy-octadecanoate + (9Z)-hexadecenoate + H(+). The enzyme catalyses 9-octadecanoyloxy-octadecanoate + H2O = 9-hydroxy-octadecanoate + octadecanoate + H(+). Its activity is regulated as follows. Activated by bile salts such as sodium taurocholate. Functionally, catalyzes the hydrolysis of a wide range of substrates including cholesteryl esters, phospholipids, lysophospholipids, di- and tri-acylglycerols, and fatty acid esters of hydroxy fatty acids (FAHFAs). Preferentially hydrolyzes FAHFAs with the ester bond further away from the carboxylate. Unsaturated FAHFAs are hydrolyzed more quickly than saturated FAHFAs. Has an essential role in the complete digestion of dietary lipids and their intestinal absorption, along with the absorption of fat-soluble vitamins. In Mus musculus (Mouse), this protein is Bile salt-activated lipase (Cel).